The primary structure comprises 433 residues: Shufflon protein C' (433 aa).

A constant region region spans residues 1–361 (MKKYDRGWAS…TGAILSCQSG (361 aa)). The tract at residues 362–433 (RWSGGNKINY…HVDAYCCPFN (72 aa)) is variable region.

In Escherichia coli, this protein is Shufflon protein C'.